The primary structure comprises 629 residues: tRNA uridine 5-carboxymethylaminomethyl modification enzyme MnmG (629 aa).

FAD is bound by residues 13–18, V125, and S180; that span reads GGGHAG. 273-287 lines the NAD(+) pocket; sequence GPRYCPSIEDKVMRF. Position 370 (Q370) interacts with FAD.

It belongs to the MnmG family. As to quaternary structure, homodimer. Heterotetramer of two MnmE and two MnmG subunits. Requires FAD as cofactor.

The protein resides in the cytoplasm. Functionally, NAD-binding protein involved in the addition of a carboxymethylaminomethyl (cmnm) group at the wobble position (U34) of certain tRNAs, forming tRNA-cmnm(5)s(2)U34. The polypeptide is tRNA uridine 5-carboxymethylaminomethyl modification enzyme MnmG (Escherichia coli O45:K1 (strain S88 / ExPEC)).